The chain runs to 231 residues: Small ribosomal subunit protein uS5 (231 aa).

Positions 61–124 (KFRSKKPYRM…NRAKLNIIKV (64 aa)) constitute an S5 DRBM domain.

The protein belongs to the universal ribosomal protein uS5 family. As to quaternary structure, part of the 30S ribosomal subunit. Contacts protein S4.

In terms of biological role, with S4 and S12 plays an important role in translational accuracy. This is Small ribosomal subunit protein uS5 from Nanoarchaeum equitans (strain Kin4-M).